Here is a 60-residue protein sequence, read N- to C-terminus: Large ribosomal subunit protein bL32 (60 aa).

Belongs to the bacterial ribosomal protein bL32 family.

The sequence is that of Large ribosomal subunit protein bL32 from Borreliella afzelii (strain PKo) (Borrelia afzelii).